The following is a 952-amino-acid chain: Ubiquitin carboxyl-terminal hydrolase 15 (952 aa).

At A2 the chain carries N-acetylalanine. Positions 2 to 223 (AEGGAADLDT…KNEDGTWPRG (222 aa)) are mediates interaction with SART3. Positions 7–118 (ADLDTQRSDI…GQEPIARKVV (112 aa)) constitute a DUSP domain. The USP domain maps to 260-904 (CGLSNLGNTC…AAYVLFYQRQ (645 aa)). C269 functions as the Nucleophile in the catalytic mechanism. T573 is modified (phosphothreonine). The segment at 597–665 (ETDGPLRCCE…GGDNDSENGL (69 aa)) is disordered. Positions 627–644 (METDEPDDESSQDQELPS) are enriched in acidic residues. Residue H862 is the Proton acceptor of the active site. Residues 923–952 (SAATGVPLESDEDSNDNDNDLENENCMHTN) are disordered. The segment covering 931 to 945 (ESDEDSNDNDNDLEN) has biased composition (acidic residues). S932 and S936 each carry phosphoserine.

Belongs to the peptidase C19 family. In terms of assembly, a homodimer structure has been reported; however it is unclear whether the protein form a homodimer in vivo. Identified in a complex with the COP9 signalosome complex (CSN). Interacts with SMAD1, SMAD2 and SMAD3; the interaction is direct. Forms a complex with SMURF2 and SMAD7. Interacts with TGFBR1. Interacts with SART3; the interaction is direct. May interact with RNF20 and RNF40. May interact with PRKN. Interacts with INCA1. Phosphorylated. Phosphorylation protects against ubiquitination and subsequent degradation by the proteasome. In terms of processing, ubiquitinated, leading to degradation by the proteasome. As to expression, highly expressed in testis and spleen, and at lower level in other tissues.

It localises to the cytoplasm. Its subcellular location is the nucleus. It is found in the mitochondrion. It catalyses the reaction Thiol-dependent hydrolysis of ester, thioester, amide, peptide and isopeptide bonds formed by the C-terminal Gly of ubiquitin (a 76-residue protein attached to proteins as an intracellular targeting signal).. Hydrolase that removes conjugated ubiquitin from target proteins and regulates various pathways such as the TGF-beta receptor signaling, NF-kappa-B and RNF41/NRDP1-PRKN pathways. Acts as a key regulator of TGF-beta receptor signaling pathway, but the precise mechanism is still unclear: according to a report, acts by promoting deubiquitination of monoubiquitinated R-SMADs (SMAD1, SMAD2 and/or SMAD3), thereby alleviating inhibition of R-SMADs and promoting activation of TGF-beta target genes. According to another reports, regulates the TGF-beta receptor signaling pathway by mediating deubiquitination and stabilization of TGFBR1, leading to an enhanced TGF-beta signal. Able to mediate deubiquitination of monoubiquitinated substrates, 'Lys-27'-, 'Lys-48'- and 'Lys-63'-linked polyubiquitin chains. May also regulate gene expression and/or DNA repair through the deubiquitination of histone H2B. Acts as an inhibitor of mitophagy by counteracting the action of parkin (PRKN): hydrolyzes cleavage of 'Lys-48'- and 'Lys-63'-linked polyubiquitin chains attached by parkin on target proteins such as MFN2, thereby reducing parkin's ability to drive mitophagy. Acts as an associated component of COP9 signalosome complex (CSN) and regulates different pathways via this association: regulates NF-kappa-B by mediating deubiquitination of NFKBIA and deubiquitinates substrates bound to VCP. Involved in endosome organization by mediating deubiquitination of SQSTM1: ubiquitinated SQSTM1 forms a molecular bridge that restrains cognate vesicles in the perinuclear region and its deubiquitination releases target vesicles for fast transport into the cell periphery. Acts as a negative regulator of antifungal immunity by mediating 'Lys-27'-linked deubiquitination of CARD9, thereby inactivating CARD9. This chain is Ubiquitin carboxyl-terminal hydrolase 15 (Usp15), found in Rattus norvegicus (Rat).